The sequence spans 162 residues: Probable chemoreceptor glutamine deamidase CheD (162 aa).

Belongs to the CheD family.

It carries out the reaction L-glutaminyl-[protein] + H2O = L-glutamyl-[protein] + NH4(+). In terms of biological role, probably deamidates glutamine residues to glutamate on methyl-accepting chemotaxis receptors (MCPs), playing an important role in chemotaxis. In Caldanaerobacter subterraneus subsp. tengcongensis (strain DSM 15242 / JCM 11007 / NBRC 100824 / MB4) (Thermoanaerobacter tengcongensis), this protein is Probable chemoreceptor glutamine deamidase CheD.